We begin with the raw amino-acid sequence, 259 residues long: MTDLKASSLRALKLMDLTTLNDDDTDEKVIALCHQAKTPVGNTAAICIYPRFIPIARKTLKEQGTPEIRIATVTNFPHGNDDIEIALAETRAAIAYGADEVDVVFPYRALMAGNEQVGFDLVKACKEACAAANVLLKVIIETGELKDEALIRKASEISIKAGADFIKTSTGKVAVNATPESARIMMEVIRDMGVEKTVGFKPAGGVRTAEDAQKYLSIADELFGADWADARHYRFGASSLLASLLKALGHGDGKSASSY.

Asp102 functions as the Proton donor/acceptor in the catalytic mechanism. Residue Lys167 is the Schiff-base intermediate with acetaldehyde of the active site. Lys201 serves as the catalytic Proton donor/acceptor.

The protein belongs to the DeoC/FbaB aldolase family. DeoC type 2 subfamily.

The protein localises to the cytoplasm. It carries out the reaction 2-deoxy-D-ribose 5-phosphate = D-glyceraldehyde 3-phosphate + acetaldehyde. The protein operates within carbohydrate degradation; 2-deoxy-D-ribose 1-phosphate degradation; D-glyceraldehyde 3-phosphate and acetaldehyde from 2-deoxy-alpha-D-ribose 1-phosphate: step 2/2. Catalyzes a reversible aldol reaction between acetaldehyde and D-glyceraldehyde 3-phosphate to generate 2-deoxy-D-ribose 5-phosphate. The chain is Deoxyribose-phosphate aldolase from Escherichia coli (strain SMS-3-5 / SECEC).